The primary structure comprises 360 residues: Isocitrate dehydrogenase [NAD] subunit 1, mitochondrial (360 aa).

A mitochondrion-targeting transit peptide spans 1–11 (MLNRTIAKRTL). The substrate site is built by Arg-109, Arg-140, and Asp-228. Position 228 (Asp-228) interacts with Mg(2+).

This sequence belongs to the isocitrate and isopropylmalate dehydrogenases family. As to quaternary structure, octamer of two non-identical subunits IDH1 and IDH2. Mg(2+) serves as cofactor. Requires Mn(2+) as cofactor.

Its subcellular location is the mitochondrion. It carries out the reaction D-threo-isocitrate + NAD(+) = 2-oxoglutarate + CO2 + NADH. With respect to regulation, allosterically regulated by several compounds including AMP, NAD(+), and citrate. Functionally, performs an essential role in the oxidative function of the citric acid cycle. Also binds RNA; specifically to the 5'-untranslated leaders of mitochondrial mRNAs. This is Isocitrate dehydrogenase [NAD] subunit 1, mitochondrial (IDH1) from Saccharomyces cerevisiae (strain ATCC 204508 / S288c) (Baker's yeast).